Consider the following 920-residue polypeptide: Isoleucine--tRNA ligase (920 aa).

A 'HIGH' region motif is present at residues 58-68 (PYANGHLHLGH). Glutamate 569 contacts L-isoleucyl-5'-AMP. The short motif at 610–614 (KMSKS) is the 'KMSKS' region element. Position 613 (lysine 613) interacts with ATP. Zn(2+)-binding residues include cysteine 895, cysteine 898, cysteine 910, and cysteine 913.

The protein belongs to the class-I aminoacyl-tRNA synthetase family. IleS type 1 subfamily. In terms of assembly, monomer. Zn(2+) serves as cofactor.

It localises to the cytoplasm. The enzyme catalyses tRNA(Ile) + L-isoleucine + ATP = L-isoleucyl-tRNA(Ile) + AMP + diphosphate. In terms of biological role, catalyzes the attachment of isoleucine to tRNA(Ile). As IleRS can inadvertently accommodate and process structurally similar amino acids such as valine, to avoid such errors it has two additional distinct tRNA(Ile)-dependent editing activities. One activity is designated as 'pretransfer' editing and involves the hydrolysis of activated Val-AMP. The other activity is designated 'posttransfer' editing and involves deacylation of mischarged Val-tRNA(Ile). The polypeptide is Isoleucine--tRNA ligase (Helicobacter pylori (strain P12)).